The following is a 65-amino-acid chain: Large ribosomal subunit protein bL33c (65 aa).

It belongs to the bacterial ribosomal protein bL33 family.

The protein localises to the plastid. It localises to the chloroplast. This chain is Large ribosomal subunit protein bL33c, found in Chaetosphaeridium globosum (Charophycean green alga).